The primary structure comprises 265 residues: ATP synthase subunit a (265 aa).

The next 6 helical transmembrane spans lie at 26 to 46 (VHLD…FFFY), 88 to 108 (IGSL…IDLI), 132 to 152 (DISA…FYTI), 168 to 188 (PFNH…TLLA), 195 to 217 (FRLF…MYMA), and 231 to 251 (LIWA…FMML).

The protein belongs to the ATPase A chain family. As to quaternary structure, F-type ATPases have 2 components, CF(1) - the catalytic core - and CF(0) - the membrane proton channel. CF(1) has five subunits: alpha(3), beta(3), gamma(1), delta(1), epsilon(1). CF(0) has three main subunits: a(1), b(2) and c(9-12). The alpha and beta chains form an alternating ring which encloses part of the gamma chain. CF(1) is attached to CF(0) by a central stalk formed by the gamma and epsilon chains, while a peripheral stalk is formed by the delta and b chains.

It is found in the cell inner membrane. In terms of biological role, key component of the proton channel; it plays a direct role in the translocation of protons across the membrane. The chain is ATP synthase subunit a from Histophilus somni (strain 129Pt) (Haemophilus somnus).